A 652-amino-acid chain; its full sequence is Drebrin (652 aa).

At Ala-2 the chain carries N-acetylalanine. Residues 5 to 134 (GFAAHRLELL…DPGAIGQRLS (130 aa)) form the ADF-H domain. Composition is skewed to basic and acidic residues over residues 211–236 (MEQE…EEHR) and 288–298 (DNPREFFKQQE). Disordered regions lie at residues 211-350 (MEQE…YITC) and 371-652 (SAAG…GGGL). Positions 328–340 (SGPPSSSSSSSSP) are enriched in low complexity. Pro residues predominate over residues 507-517 (PDTPAGPPVPP). Composition is skewed to acidic residues over residues 540-554 (QHEE…EEAT) and 640-652 (PLPE…GGGL).

As to expression, brain neurons.

It localises to the cytoplasm. The protein localises to the cell projection. It is found in the dendrite. The protein resides in the cell cortex. Its subcellular location is the cell junction. It localises to the growth cone. Functionally, actin cytoskeleton-organizing protein that plays a role in the formation of cell projections. Plays a role in dendritic spine morphogenesis and organization, including the localization of the dopamine receptor DRD1 to the dendritic spines. Involved in synaptic plasticity. The polypeptide is Drebrin (DBN1) (Gallus gallus (Chicken)).